Here is a 388-residue protein sequence, read N- to C-terminus: UDP-4-amino-4-deoxy-L-arabinose--oxoglutarate aminotransferase (388 aa).

Lys183 carries the N6-(pyridoxal phosphate)lysine modification.

This sequence belongs to the DegT/DnrJ/EryC1 family. ArnB subfamily. In terms of assembly, homodimer. Pyridoxal 5'-phosphate serves as cofactor.

It catalyses the reaction UDP-4-amino-4-deoxy-beta-L-arabinose + 2-oxoglutarate = UDP-beta-L-threo-pentopyranos-4-ulose + L-glutamate. Its pathway is nucleotide-sugar biosynthesis; UDP-4-deoxy-4-formamido-beta-L-arabinose biosynthesis; UDP-4-deoxy-4-formamido-beta-L-arabinose from UDP-alpha-D-glucuronate: step 2/3. It participates in bacterial outer membrane biogenesis; lipopolysaccharide biosynthesis. In terms of biological role, catalyzes the conversion of UDP-4-keto-arabinose (UDP-Ara4O) to UDP-4-amino-4-deoxy-L-arabinose (UDP-L-Ara4N). The modified arabinose is attached to lipid A and is required for resistance to polymyxin and cationic antimicrobial peptides. This is UDP-4-amino-4-deoxy-L-arabinose--oxoglutarate aminotransferase from Shewanella sediminis (strain HAW-EB3).